The following is a 94-amino-acid chain: MNTKFTVLIFLGVIVVSYGWITEKKIQKVLDEKLPNGFIKGAAKAVVHKLAKSEYGCMMDISWNKDCQRHCQSTEQKDGICHGMKCKCGKPRSY.

The first 18 residues, 1-18 (MNTKFTVLIFLGVIVVSY), serve as a signal peptide directing secretion. Positions 54 to 94 (EYGCMMDISWNKDCQRHCQSTEQKDGICHGMKCKCGKPRSY) constitute a BetaSPN-type CS-alpha/beta domain. Cystine bridges form between Cys57-Cys81, Cys67-Cys86, and Cys71-Cys88.

It belongs to the long chain scorpion toxin family. Class 3 subfamily. In terms of tissue distribution, expressed by the venom gland.

The protein resides in the secreted. Functionally, has antibacterial activity. This chain is Scorpine-like-1, found in Urodacus yaschenkoi (Inland robust scorpion).